The following is a 400-amino-acid chain: MKLKTLSVGEVNNYVKKLVENDFILKNLNVKGEISNLKFHSSGHIYFSLKDENSKVNCIMFKNNAVNLDFRLEEGMKVEIKARLGVYHKEGTYQLYCENIKKAGIGELFEEFHKLKKELSEEGIFDEKYKRALPKFPKRIGIITARTGAAVRDIINVIQRRNKSLDIILYPAKVQGENAADSIIEGIRYFNNEKSVDVIILGRGGGSIEELWTFNNRDLAYEIFNSRIPTVSAVGHEVDFTISDFVSDMRAPTPSAAGELVSPSLQEMINDLLNKKEFLHRAIDRKFLNAKKDVDLLHKGLKGNNPKHIIEKRIKEVNSLEEKLNFLGKRKIDKAKDELIALNSILQTLNPLNTLGRGYSVIMDKKDKVINEVSELKKNDMVKVIMKDGSVNIDIKIINE.

Belongs to the XseA family. In terms of assembly, heterooligomer composed of large and small subunits.

The protein localises to the cytoplasm. The catalysed reaction is Exonucleolytic cleavage in either 5'- to 3'- or 3'- to 5'-direction to yield nucleoside 5'-phosphates.. In terms of biological role, bidirectionally degrades single-stranded DNA into large acid-insoluble oligonucleotides, which are then degraded further into small acid-soluble oligonucleotides. The protein is Exodeoxyribonuclease 7 large subunit of Clostridium perfringens (strain ATCC 13124 / DSM 756 / JCM 1290 / NCIMB 6125 / NCTC 8237 / Type A).